Consider the following 476-residue polypeptide: Protein transport protein Sec61 subunit alpha (476 aa).

Topologically, residues 2–33 (GIKFLEVIKPFCAVLPEIQKPERKIQFREKVL) are cytoplasmic. Residues 34-53 (WTAITLFIFLVCCQIPLFGI) form a helical membrane-spanning segment. The Lumenal segment spans residues 54-76 (MSSDSADPFYWMRVILASNRGTL). The chain crosses the membrane as a helical span at residues 77–96 (MELGISPIVTSGLIMQLLAG). At 97–117 (AKIIGVGDTPKDRALFNGAQK) the chain is on the cytoplasmic side. The helical transmembrane segment at 118-138 (LFGMIITIGQAIVYVMTGMYG) threads the bilayer. Topologically, residues 139–144 (DPSEMG) are lumenal. Residues 145 to 165 (AGICLLIIIQLFVAGLIVLLL) traverse the membrane as a helical segment. Over 166-172 (DELLQKG) the chain is Cytoplasmic. Residues 173 to 193 (YGLGSGISLFIATNICETIVW) form a helical membrane-spanning segment. The Lumenal portion of the chain corresponds to 194–240 (KAFSPTTVNTGRGTEFEGAIIALFHLLATRTDKVRALREGFYRQNLP). A helical membrane pass occupies residues 241-261 (NLMNLIATVFVFAVVIYFQGF). At 262–288 (RVDLPIKSARYRGQYNTYPIKLFYTSN) the chain is on the cytoplasmic side. A helical transmembrane segment spans residues 289–309 (IPIILQSALVSNLYVISQMLS). The Lumenal segment spans residues 310–354 (TRFSGNFLVNLLGTWSDATSGGPARAYPVAGLCYYLSPPESFGSV). Residues 355-375 (LDDPVHAGIYIVFMLGSCAFF) traverse the membrane as a helical segment. Topologically, residues 376–420 (SKTWIEVSGSSAKDVAKQLKEQQMVMRGHRETSMVHELNRYIPTA) are cytoplasmic. The chain crosses the membrane as a helical span at residues 421–441 (AAFGGLCIGGLSVMADFLGAI). Over 442–445 (GSGT) the chain is Lumenal. A helical transmembrane segment spans residues 446–462 (GILLAVTIIYQYFEIFV). Over 463-476 (KEQSEVGSMGALLF) the chain is Cytoplasmic.

Belongs to the SecY/SEC61-alpha family. In terms of assembly, the SEC61 channel-forming translocon complex consists of channel-forming core components SEC61A1, SEC61B and SEC61G and different auxiliary components such as SEC62 and SEC63. The SEC61 channel associates with the multi-pass translocon (MPT) complex.

Its subcellular location is the endoplasmic reticulum membrane. Component of SEC61 channel-forming translocon complex that mediates transport of signal peptide-containing precursor polypeptides across the endoplasmic reticulum (ER). Forms a ribosome receptor and a gated pore in the ER membrane, both functions required for cotranslational translocation of nascent polypeptides. May cooperate with auxiliary protein SEC62, SEC63 and HSPA5/BiP to enable post-translational transport of small presecretory proteins. The SEC61 channel is also involved in ER membrane insertion of transmembrane proteins: it mediates membrane insertion of the first few transmembrane segments of proteins, while insertion of subsequent transmembrane regions of multi-pass membrane proteins is mediated by the multi-pass translocon (MPT) complex. The chain is Protein transport protein Sec61 subunit alpha (sec61a) from Hemitripterus americanus (Sea raven).